We begin with the raw amino-acid sequence, 248 residues long: MHFSTLFGAAATAALAGSTNASPLARRQVPVGTPILQCTQPGLVALTYDDGPFTFTPQLLDILKQNDVRATFFVNGNNWANIEAGSNPDTIRRMRADGHLVGSHTYAHPDLNTLSSADRISQMRHVEEATRRIDGFAPKYMRAPYLSCDAGCQGDLGGLGYHIIDTNLDTKDYENNKPETTHLSAEKFNNELSADVGANSYIVLSHDVHEQTVVSLTQKLIDTLKSKGYRAVTVGECLGDAPENWYKA.

A signal peptide spans 1 to 26; that stretch reads MHFSTLFGAAATAALAGSTNASPLAR. Intrachain disulfides connect cysteine 38–cysteine 237 and cysteine 148–cysteine 152. Residues 42-232 form the NodB homology domain; that stretch reads GLVALTYDDG…TLKSKGYRAV (191 aa). Aspartate 49 functions as the Proton acceptor in the catalytic mechanism. Aspartate 49 is an acetate binding site. Aspartate 50, histidine 104, and histidine 108 together coordinate Co(2+). Tyrosine 145 lines the acetate pocket. The Proton donor role is filled by histidine 206.

It belongs to the polysaccharide deacetylase family. Monomer. Co(2+) is required as a cofactor. N-glycosylated.

Its subcellular location is the secreted. It carries out the reaction [(1-&gt;4)-N-acetyl-beta-D-glucosaminyl](n) + n H2O = chitosan + n acetate. In terms of biological role, hydrolyzes the N-acetamido groups of N-acetyl-D-glucosamine polymers in chitin to form chitosan and acetate. May play a role in evasion of the host immune response; plant chitinases liberate chitin molecules from the fungal cell wall which act as elicitors of the plant immune response, deacetylation of the liberated chitin neutralizes elicitor activity. The polypeptide is Chitin deacetylase (Colletotrichum lindemuthianum (Bean anthracnose fungus)).